The chain runs to 404 residues: Ethanolamine-phosphate cytidylyltransferase (404 aa).

Residues 173 to 201 form a disordered region; that stretch reads YADSFGKPPHPTPAGDTLSSEVSSQCPGG. The segment covering 189–201 has biased composition (polar residues); it reads TLSSEVSSQCPGG. Residues 239–240, 247–250, K277, 325–328, and 354–358 each bind CTP; these read AF, HVDF, HGKT, and SGSDL. The residue at position 356 (S356) is a Phosphoserine. Phosphothreonine is present on residues T359 and T360.

It belongs to the cytidylyltransferase family.

It catalyses the reaction phosphoethanolamine + CTP + H(+) = CDP-ethanolamine + diphosphate. The protein operates within phospholipid metabolism; phosphatidylethanolamine biosynthesis; phosphatidylethanolamine from ethanolamine: step 2/3. In terms of biological role, ethanolamine-phosphate cytidylyltransferase that catalyzes the second step in the synthesis of phosphatidylethanolamine (PE) from ethanolamine via the CDP-ethanolamine pathway. Phosphatidylethanolamine is a dominant inner-leaflet phospholipid in cell membranes, where it plays a role in membrane function by structurally stabilizing membrane-anchored proteins, and participates in important cellular processes such as cell division, cell fusion, blood coagulation, and apoptosis. In Mus musculus (Mouse), this protein is Ethanolamine-phosphate cytidylyltransferase (Pcyt2).